A 211-amino-acid chain; its full sequence is ATP phosphoribosyltransferase (211 aa).

This sequence belongs to the ATP phosphoribosyltransferase family. Short subfamily. In terms of assembly, heteromultimer composed of HisG and HisZ subunits.

It localises to the cytoplasm. The enzyme catalyses 1-(5-phospho-beta-D-ribosyl)-ATP + diphosphate = 5-phospho-alpha-D-ribose 1-diphosphate + ATP. It participates in amino-acid biosynthesis; L-histidine biosynthesis; L-histidine from 5-phospho-alpha-D-ribose 1-diphosphate: step 1/9. Its function is as follows. Catalyzes the condensation of ATP and 5-phosphoribose 1-diphosphate to form N'-(5'-phosphoribosyl)-ATP (PR-ATP). Has a crucial role in the pathway because the rate of histidine biosynthesis seems to be controlled primarily by regulation of HisG enzymatic activity. The sequence is that of ATP phosphoribosyltransferase from Bacillus cereus (strain 03BB102).